The sequence spans 555 residues: CTP synthase (555 aa).

Residues 1-267 are amidoligase domain; the sequence is MPKFVFVTGG…CKEVLEFLDL (267 aa). S13 contacts CTP. A UTP-binding site is contributed by S13. Residues 14 to 19 and D71 each bind ATP; that span reads SIGKGI. Mg(2+) contacts are provided by D71 and E141. Residues 148 to 150, 188 to 193, and K224 each bind CTP; these read DIE and KTKPTQ. UTP contacts are provided by residues 188–193 and K224; that span reads KTKPTQ. The region spanning 292–534 is the Glutamine amidotransferase type-1 domain; the sequence is KVAVVGKYVQ…IAAAQSRLPR (243 aa). G354 serves as a coordination point for L-glutamine. C381 serves as the catalytic Nucleophile; for glutamine hydrolysis. Residues 382 to 385, E405, and R462 each bind L-glutamine; that span reads LGMQ. Residues H507 and E509 contribute to the active site. Residues 532–555 are disordered; the sequence is LPRSPQEALKQTQINSPNQSKNNP. Positions 540–555 are enriched in polar residues; it reads LKQTQINSPNQSKNNP.

It belongs to the CTP synthase family. In terms of assembly, homotetramer.

The enzyme catalyses UTP + L-glutamine + ATP + H2O = CTP + L-glutamate + ADP + phosphate + 2 H(+). The catalysed reaction is L-glutamine + H2O = L-glutamate + NH4(+). It carries out the reaction UTP + NH4(+) + ATP = CTP + ADP + phosphate + 2 H(+). It functions in the pathway pyrimidine metabolism; CTP biosynthesis via de novo pathway; CTP from UDP: step 2/2. Allosterically activated by GTP, when glutamine is the substrate; GTP has no effect on the reaction when ammonia is the substrate. The allosteric effector GTP functions by stabilizing the protein conformation that binds the tetrahedral intermediate(s) formed during glutamine hydrolysis. Inhibited by the product CTP, via allosteric rather than competitive inhibition. Its function is as follows. Catalyzes the ATP-dependent amination of UTP to CTP with either L-glutamine or ammonia as the source of nitrogen. Regulates intracellular CTP levels through interactions with the four ribonucleotide triphosphates. This Prochlorococcus marinus (strain MIT 9211) protein is CTP synthase.